The primary structure comprises 74 residues: Auswaprin-a (74 aa).

Residues 1–24 (MSSGGLLLLLGLLTLWGVLTPVSS) form the signal peptide. The WAP domain occupies 27 to 71 (RPKKPGLCPPRPQKPCVKECKNDWSCSGQQKCCNYGCIDECRDPI). 4 cysteine pairs are disulfide-bonded: Cys-34/Cys-59, Cys-42/Cys-63, Cys-46/Cys-58, and Cys-52/Cys-67.

The protein belongs to the venom waprin family. Expressed by the venom gland.

The protein resides in the secreted. Damages membranes of susceptible bacteria. Has no hemolytic activity. Not toxic to mice. Does not inhibit the proteinases elastase and cathepsin G. In Pseudechis australis (Mulga snake), this protein is Auswaprin-a.